We begin with the raw amino-acid sequence, 541 residues long: Light-independent protochlorophyllide reductase subunit B (541 aa).

Position 36 (Asp-36) interacts with [4Fe-4S] cluster. Residue Asp-290 is the Proton donor of the active site. 425 to 426 (GL) is a substrate binding site.

The protein belongs to the ChlB/BchB/BchZ family. In terms of assembly, protochlorophyllide reductase is composed of three subunits; ChlL, ChlN and ChlB. Forms a heterotetramer of two ChlB and two ChlN subunits. [4Fe-4S] cluster serves as cofactor.

It carries out the reaction chlorophyllide a + oxidized 2[4Fe-4S]-[ferredoxin] + 2 ADP + 2 phosphate = protochlorophyllide a + reduced 2[4Fe-4S]-[ferredoxin] + 2 ATP + 2 H2O. It participates in porphyrin-containing compound metabolism; chlorophyll biosynthesis (light-independent). Component of the dark-operative protochlorophyllide reductase (DPOR) that uses Mg-ATP and reduced ferredoxin to reduce ring D of protochlorophyllide (Pchlide) to form chlorophyllide a (Chlide). This reaction is light-independent. The NB-protein (ChlN-ChlB) is the catalytic component of the complex. The chain is Light-independent protochlorophyllide reductase subunit B from Synechococcus sp. (strain CC9902).